Here is a 447-residue protein sequence, read N- to C-terminus: Argininosuccinate synthase (447 aa).

Residues 17–25 (AFSGGLDTS) and Ala43 each bind ATP. An L-citrulline-binding site is contributed by Tyr99. 2 residues coordinate ATP: Gly129 and Thr131. Residues Thr131, Asn135, and Asp136 each contribute to the L-aspartate site. Asn135 contacts L-citrulline. Residue Asp136 participates in ATP binding. L-citrulline contacts are provided by Arg139 and Ser192. ATP is bound at residue Asp194. L-citrulline contacts are provided by Thr201, Glu203, and Glu280.

This sequence belongs to the argininosuccinate synthase family. Type 2 subfamily. As to quaternary structure, homotetramer.

It is found in the cytoplasm. The catalysed reaction is L-citrulline + L-aspartate + ATP = 2-(N(omega)-L-arginino)succinate + AMP + diphosphate + H(+). The protein operates within amino-acid biosynthesis; L-arginine biosynthesis; L-arginine from L-ornithine and carbamoyl phosphate: step 2/3. The polypeptide is Argininosuccinate synthase (Janthinobacterium sp. (strain Marseille) (Minibacterium massiliensis)).